Reading from the N-terminus, the 448-residue chain is Probable D-serine dehydratase (448 aa).

Position 119 is an N6-(pyridoxal phosphate)lysine (K119).

It belongs to the serine/threonine dehydratase family. DsdA subfamily. Requires pyridoxal 5'-phosphate as cofactor.

The catalysed reaction is D-serine = pyruvate + NH4(+). This Pseudomonas aeruginosa (strain ATCC 15692 / DSM 22644 / CIP 104116 / JCM 14847 / LMG 12228 / 1C / PRS 101 / PAO1) protein is Probable D-serine dehydratase.